The following is a 136-amino-acid chain: Ribonuclease P protein component (136 aa).

The protein belongs to the RnpA family. As to quaternary structure, consists of a catalytic RNA component (M1 or rnpB) and a protein subunit.

The catalysed reaction is Endonucleolytic cleavage of RNA, removing 5'-extranucleotides from tRNA precursor.. In terms of biological role, RNaseP catalyzes the removal of the 5'-leader sequence from pre-tRNA to produce the mature 5'-terminus. It can also cleave other RNA substrates such as 4.5S RNA. The protein component plays an auxiliary but essential role in vivo by binding to the 5'-leader sequence and broadening the substrate specificity of the ribozyme. This Arthrobacter sp. (strain FB24) protein is Ribonuclease P protein component.